The sequence spans 508 residues: Photosystem II CP47 reaction center protein (508 aa).

A run of 6 helical transmembrane segments spans residues 21-36 (AVHI…WAGS), 101-115 (IVFS…TWHW), 140-156 (GIHL…FGAF), 203-218 (VAAG…FHLS), 237-252 (VLSS…AFIV), and 457-472 (TFAL…HGAR).

This sequence belongs to the PsbB/PsbC family. PsbB subfamily. PSII is composed of 1 copy each of membrane proteins PsbA, PsbB, PsbC, PsbD, PsbE, PsbF, PsbH, PsbI, PsbJ, PsbK, PsbL, PsbM, PsbT, PsbX, PsbY, PsbZ, Psb30/Ycf12, at least 3 peripheral proteins of the oxygen-evolving complex and a large number of cofactors. It forms dimeric complexes. The cofactor is Binds multiple chlorophylls. PSII binds additional chlorophylls, carotenoids and specific lipids..

It localises to the plastid. It is found in the chloroplast thylakoid membrane. Functionally, one of the components of the core complex of photosystem II (PSII). It binds chlorophyll and helps catalyze the primary light-induced photochemical processes of PSII. PSII is a light-driven water:plastoquinone oxidoreductase, using light energy to abstract electrons from H(2)O, generating O(2) and a proton gradient subsequently used for ATP formation. This chain is Photosystem II CP47 reaction center protein, found in Welwitschia mirabilis (Tree tumbo).